A 507-amino-acid chain; its full sequence is Capsid vertex component 1 (507 aa).

The tract at residues 219 to 257 is disordered; it reads AAAETSVSKHHPALENPSNIRGSAGGEGGGGRAGTGGTV. The span at 241–257 shows a compositional bias: gly residues; it reads SAGGEGGGGRAGTGGTV.

The protein belongs to the herpesviridae CVC1 protein family. Interacts (via C-terminus) with capsid vertex component 2/CVC2.

The protein localises to the virion. It is found in the host nucleus. Capsid vertex-specific component that plays a role during viral DNA encapsidation, assuring correct genome cleavage and presumably stabilizing capsids that contain full-length viral genomes. This chain is Capsid vertex component 1, found in Epstein-Barr virus (strain B95-8) (HHV-4).